Here is a 185-residue protein sequence, read N- to C-terminus: Ribosome maturation factor RimM (185 aa).

The 76-residue stretch at 108-183 (PGEFHVTDLL…RLEIKTIPGL (76 aa)) folds into the PRC barrel domain.

It belongs to the RimM family. Binds ribosomal protein uS19.

The protein localises to the cytoplasm. An accessory protein needed during the final step in the assembly of 30S ribosomal subunit, possibly for assembly of the head region. Essential for efficient processing of 16S rRNA. May be needed both before and after RbfA during the maturation of 16S rRNA. It has affinity for free ribosomal 30S subunits but not for 70S ribosomes. The protein is Ribosome maturation factor RimM of Synechocystis sp. (strain ATCC 27184 / PCC 6803 / Kazusa).